Consider the following 96-residue polypeptide: MTLRPLHDKVILKREEVETRSAGGIVLTGSAATKSTRGKVIAVGTGRLFENGSVQALAVKVGDVVIFNEGYGVKSEKIDGEEVLILSENDILAIVE.

The protein belongs to the GroES chaperonin family. Heptamer of 7 subunits arranged in a ring. Interacts with the chaperonin GroEL.

It localises to the cytoplasm. In terms of biological role, together with the chaperonin GroEL, plays an essential role in assisting protein folding. The GroEL-GroES system forms a nano-cage that allows encapsulation of the non-native substrate proteins and provides a physical environment optimized to promote and accelerate protein folding. GroES binds to the apical surface of the GroEL ring, thereby capping the opening of the GroEL channel. This Actinobacillus pleuropneumoniae serotype 5b (strain L20) protein is Co-chaperonin GroES.